The following is a 186-amino-acid chain: Peptide deformylase (186 aa).

Residues cysteine 113 and histidine 156 each coordinate Fe cation. Glutamate 157 is an active-site residue. Histidine 160 is a Fe cation binding site.

It belongs to the polypeptide deformylase family. Fe(2+) is required as a cofactor.

The enzyme catalyses N-terminal N-formyl-L-methionyl-[peptide] + H2O = N-terminal L-methionyl-[peptide] + formate. In terms of biological role, removes the formyl group from the N-terminal Met of newly synthesized proteins. Requires at least a dipeptide for an efficient rate of reaction. N-terminal L-methionine is a prerequisite for activity but the enzyme has broad specificity at other positions. The polypeptide is Peptide deformylase (Lactiplantibacillus plantarum (strain ATCC BAA-793 / NCIMB 8826 / WCFS1) (Lactobacillus plantarum)).